The sequence spans 197 residues: uncharacterized protein (197 aa).

An N-terminal signal peptide occupies residues methionine 1–alanine 23. Asparagine 19 and asparagine 26 each carry an N-linked (GlcNAc...) asparagine glycan. The Extracellular portion of the chain corresponds to serine 24–threonine 61. The chain crosses the membrane as a helical span at residues leucine 62–phenylalanine 82. Over histidine 83–serine 197 the chain is Cytoplasmic. Residues methionine 94–serine 180 form a disordered region. Composition is skewed to basic and acidic residues over residues arginine 96–serine 107 and histidine 125–arginine 136. Positions serine 147–proline 161 are enriched in low complexity. Residues cysteine 162–serine 171 show a composition bias toward pro residues.

It localises to the membrane. This is an uncharacterized protein from Macaca fascicularis (Crab-eating macaque).